Consider the following 320-residue polypeptide: mRNA decay activator protein ZFP36 (320 aa).

A necessary for nuclear export region spans residues 1 to 15; that stretch reads MDLSAIYESLMSMSH. Positions 1-93 are necessary and sufficient for the association with mRNA decay enzymes and mRNA decay activation; it reads MDLSAIYESL…PTSPTATPTT (93 aa). Necessary for localization of ARE-containing mRNAs to processing bodies (PBs) regions lie at residues 1-167 and 93-320; these read MDLS…DLAL and TSSR…SVSE. A disordered region spans residues 17-50; that stretch reads LSPDHGGTESSGGLWNINSSDSIPSGVTSRLTGR. Polar residues predominate over residues 27–50; it reads SGGLWNINSSDSIPSGVTSRLTGR. Ser53 carries the phosphoserine; by MAPKAPK2 modification. Residue Ser59 is modified to Phosphoserine. The stretch at 64 to 68 is one P-P-P-P-G repeat; the sequence is PPPPG. The span at 66–85 shows a compositional bias: pro residues; it reads PPGFAPLAPRPGPELSPSPT. Positions 66-95 are disordered; the sequence is PPGFAPLAPRPGPELSPSPTSPTATPTTSS. Ser81 and Ser83 each carry phosphoserine. Residue Thr85 is modified to Phosphothreonine. The residue at position 86 (Ser86) is a Phosphoserine. Residues 86 to 95 are compositionally biased toward low complexity; that stretch reads SPTATPTTSS. A necessary for nuclear localization region spans residues 88-161; it reads TATPTTSSRY…GSRCHFIHNP (74 aa). Positions 90–166 are necessary for RNA-binding; that stretch reads TPTTSSRYKT…FIHNPTEDLA (77 aa). 2 consecutive C3H1-type zinc fingers follow at residues 96–124 and 134–162; these read RYKT…HGPG and KYKT…HNPT. Positions 96-187 are necessary for interaction with PABPN1; it reads RYKTELCRTY…ISFSGLPSGR (92 aa). Residues 167–320 form a necessary for mRNA decay activation region; the sequence is LPGQPHVLRQ…PIFNRISVSE (154 aa). Phosphoserine; by MAPKAPK2 is present on Ser179. The segment at 180–310 is disordered; it reads FSGLPSGRRT…PQPPAPPRRL (131 aa). The residue at position 190 (Ser190) is a Phosphoserine. The P-P-P-P-G repeat unit spans residues 191 to 195; the sequence is PPPPG. Low complexity predominate over residues 197-209; that stretch reads SGPSLSSCSFSPS. Residue Ser211 is modified to Phosphoserine. A P-P-P-P-G repeat occupies 212–216; sequence PPPPG. A Phosphoserine; by MAPK1; in vitro modification is found at Ser221. Thr251 carries the phosphothreonine modification. 2 positions are modified to phosphoserine: Ser270 and Ser290. The span at 280 to 290 shows a compositional bias: low complexity; it reads SSGSSLGGSDS. Positions 300-309 are enriched in pro residues; that stretch reads PPQPPAPPRR. An interaction with CNOT1 region spans residues 306-320; sequence PPRRLPIFNRISVSE. Position 317 is a phosphoserine (Ser317).

Associates with cytoplasmic CCR4-NOT and PAN2-PAN3 deadenylase complexes to trigger ARE-containing mRNA deadenylation and decay processes. Part of a mRNA decay activation complex at least composed of poly(A)-specific exoribonucleases CNOT6, EXOSC2 and XRN1 and mRNA-decapping enzymes DCP1A and DCP2. Associates with the RNA exosome complex. Interacts (via phosphorylated form) with 14-3-3 proteins; these interactions promote exclusion of ZFP36 from cytoplasmic stress granules in response to arsenite treatment in a MAPKAPK2-dependent manner and does not prevent CCR4-NOT deadenylase complex recruitment or ZFP36-induced ARE-containing mRNA deadenylation and decay processes. Interacts with 14-3-3 proteins; these interactions occur in response to rapamycin in an Akt-dependent manner. Interacts with AGO2 and AGO4. Interacts (via C-terminus) with CNOT1; this interaction occurs in a RNA-independent manner and induces mRNA deadenylation. Interacts (via N-terminus) with CNOT6. Interacts with CNOT6L. Interacts (via C-terminus) with CNOT7; this interaction occurs in a RNA-independent manner, induces mRNA deadenylation and is inhibited in a phosphorylation MAPKAPK2-dependent manner. Interacts (via unphosphorylated form) with CNOT8; this interaction occurs in a RNA-independent manner and is inhibited in a phosphorylation MAPKAPK2-dependent manner. Interacts with DCP1A. Interacts (via N-terminus) with DCP2. Interacts with EDC3. Interacts (via N-terminus) with EXOSC2. Interacts with heat shock 70 kDa proteins. Interacts with KHSRP; this interaction increases upon cytokine-induced treatment. Interacts with MAP3K4; this interaction enhances the association with SH3KBP1/CIN85. Interacts with MAPKAPK2; this interaction occurs upon skeletal muscle satellite cell activation. Interacts with NCL. Interacts with NUP214; this interaction increases upon lipopolysaccharide (LPS) stimulation. Interacts with PABPC1; this interaction occurs in a RNA-dependent manner. Interacts (via hypophosphorylated form) with PABPN1 (via RRM domain and C-terminal arginine-rich region); this interaction occurs in the nucleus in a RNA-independent manner, decreases in presence of single-stranded poly(A) RNA-oligomer and in a p38 MAPK-dependent-manner and inhibits nuclear poly(A) tail synthesis. Interacts with PAN2. Interacts (via C3H1-type zinc finger domains) with PKM. Interacts (via C3H1-type zinc finger domains) with nuclear RNA poly(A) polymerase. Interacts with PPP2CA; this interaction occurs in LPS-stimulated cells and induces ZFP36 dephosphorylation, and hence may promote ARE-containing mRNAs decay. Interacts (via C-terminus) with PRR5L (via C-terminus); this interaction may accelerate ZFP36-mediated mRNA decay during stress. Interacts (via C-terminus) with SFN; this interaction occurs in a phosphorylation-dependent manner. Interacts (via extreme C-terminal region) with SH3KBP1/CIN85 (via SH3 domains); this interaction enhances MAP3K4-induced phosphorylation of ZFP36 at Ser-59 and Ser-86 and does not alter neither ZFP36 binding to ARE-containing transcripts nor TNF-alpha mRNA decay. Interacts with XRN1. Interacts (via C-terminus and Ser-179 phosphorylated form) with YWHAB; this interaction occurs in a p38/MAPKAPK2-dependent manner, increases cytoplasmic localization of ZFP36 and protects ZFP36 from Ser-179 dephosphorylation by serine/threonine phosphatase 2A, and hence may be crucial for stabilizing ARE-containing mRNAs. Interacts (via phosphorylated form) with YWHAE. Interacts (via C-terminus) with YWHAG; this interaction occurs in a phosphorylation-dependent manner. Interacts with YWHAH; this interaction occurs in a phosphorylation-dependent manner. Interacts with YWHAQ; this interaction occurs in a phosphorylation-dependent manner. Interacts with (via C-terminus) YWHAZ; this interaction occurs in a phosphorylation-dependent manner. Does not interact with SH3KBP1. Interacts (via P-P-P-P-G repeats) with GIGYF2; the interaction is direct. Phosphorylated. Phosphorylation at serine and/or threonine residues occurs in a p38 MAPK- and MAPKAPK2-dependent manner. Phosphorylated by MAPKAPK2 at Ser-53 and Ser-179; phosphorylation increases its stability and cytoplasmic localization, promotes binding to 14-3-3 adapter proteins and inhibits the recruitment of cytoplasmic CCR4-NOT and PAN2-PAN3 deadenylase complexes to the mRNA decay machinery, thereby inhibiting ZFP36-induced ARE-containing mRNA deadenylation and decay processes. Phosphorylation by MAPKAPK2 does not impair ARE-containing RNA-binding. Phosphorylated in a MAPKAPK2- and p38 MAPK-dependent manner upon skeletal muscle satellite cell activation; this phosphorylation inhibits ZFP36-mediated mRNA decay activity, and hence stabilizes MYOD1 mRNA. Phosphorylated by MAPK1 upon mitogen stimulation. Phosphorylated at Ser-59 and Ser-86; these phosphorylations increase in a SH3KBP1-dependent manner. Phosphorylated at serine and threonine residues in a pyruvate kinase PKM- and p38 MAPK-dependent manner. Phosphorylation at Ser-53 may participate in the PKM-mediated degradation of ZFP36 in a p38 MAPK-dependent manner. Dephosphorylated by serine/threonine phosphatase 2A at Ser-179. Post-translationally, ubiquitinated; pyruvate kinase (PKM)-dependent ubiquitination leads to proteasomal degradation through a p38 MAPK signaling pathway.

Its subcellular location is the nucleus. It localises to the cytoplasm. It is found in the cytoplasmic granule. The protein resides in the P-body. Zinc-finger RNA-binding protein that destabilizes numerous cytoplasmic AU-rich element (ARE)-containing mRNA transcripts by promoting their poly(A) tail removal or deadenylation, and hence provide a mechanism for attenuating protein synthesis. Acts as an 3'-untranslated region (UTR) ARE mRNA-binding adapter protein to communicate signaling events to the mRNA decay machinery. Recruits deadenylase CNOT7 (and probably the CCR4-NOT complex) via association with CNOT1, and hence promotes ARE-mediated mRNA deadenylation. Also functions by recruiting components of the cytoplasmic RNA decay machinery to the bound ARE-containing mRNAs. Self regulates by destabilizing its own mRNA. Binds to 3'-UTR ARE of numerous mRNAs. Also binds to ARE of its own mRNA. Plays a role in anti-inflammatory responses; suppresses tumor necrosis factor (TNF)-alpha production by stimulating ARE-mediated TNF-alpha mRNA decay and several other inflammatory ARE-containing mRNAs in interferon (IFN)- and/or lipopolysaccharide (LPS)-induced macrophages. Also plays a role in the regulation of dendritic cell maturation at the post-transcriptional level, and hence operates as part of a negative feedback loop to limit the inflammatory response. Promotes ARE-mediated mRNA decay of hypoxia-inducible factor HIF1A mRNA during the response of endothelial cells to hypoxia. Positively regulates early adipogenesis of preadipocytes by promoting ARE-mediated mRNA decay of immediate early genes (IEGs). Negatively regulates hematopoietic/erythroid cell differentiation by promoting ARE-mediated mRNA decay of the transcription factor STAT5B mRNA. Plays a role in maintaining skeletal muscle satellite cell quiescence by promoting ARE-mediated mRNA decay of the myogenic determination factor MYOD1 mRNA. Also associates with and regulates the expression of non-ARE-containing target mRNAs at the post-transcriptional level, such as MHC class I mRNAs. Participates in association with argonaute RISC catalytic components in the ARE-mediated mRNA decay mechanism; assists microRNA (miRNA) targeting ARE-containing mRNAs. May also play a role in the regulation of cytoplasmic mRNA decapping; enhances decapping of ARE-containing RNAs, in vitro. Involved in the delivery of target ARE-mRNAs to processing bodies (PBs). In addition to its cytosolic mRNA-decay function, affects nuclear pre-mRNA processing. Negatively regulates nuclear poly(A)-binding protein PABPN1-stimulated polyadenylation activity on ARE-containing pre-mRNA during LPS-stimulated macrophages. Also involved in the regulation of stress granule (SG) and P-body (PB) formation and fusion. Plays a role in the regulation of keratinocyte proliferation, differentiation and apoptosis. Plays a role as a tumor suppressor by inhibiting cell proliferation in breast cancer cells. The chain is mRNA decay activator protein ZFP36 from Rattus norvegicus (Rat).